A 316-amino-acid chain; its full sequence is Transaldolase (316 aa).

The active-site Schiff-base intermediate with substrate is Lys-127.

The protein belongs to the transaldolase family. Type 2 subfamily.

It localises to the cytoplasm. The catalysed reaction is D-sedoheptulose 7-phosphate + D-glyceraldehyde 3-phosphate = D-erythrose 4-phosphate + beta-D-fructose 6-phosphate. It participates in carbohydrate degradation; pentose phosphate pathway; D-glyceraldehyde 3-phosphate and beta-D-fructose 6-phosphate from D-ribose 5-phosphate and D-xylulose 5-phosphate (non-oxidative stage): step 2/3. Functionally, transaldolase is important for the balance of metabolites in the pentose-phosphate pathway. The polypeptide is Transaldolase (Helicobacter pylori (strain P12)).